A 355-amino-acid polypeptide reads, in one-letter code: Guanine nucleotide-binding protein G(i) subunit alpha-2 (355 aa).

The N-myristoyl glycine moiety is linked to residue glycine 2. Cysteine 3 carries the S-palmitoyl cysteine lipid modification. The region spanning 32-355 (REVKLLLLGA…KNNLKDCGLF (324 aa)) is the G-alpha domain. The G1 motif stretch occupies residues 35 to 48 (KLLLLGAGESGKST). GTP-binding positions include 40-47 (GAGESGKS), 176-182 (LRTRVKT), 201-205 (DVGGQ), 270-273 (NKKD), and alanine 327. Positions 47 and 182 each coordinate Mg(2+). The segment at 174 to 182 (DVLRTRVKT) is G2 motif. A G3 motif region spans residues 197 to 206 (FKMFDVGGQR). A G4 motif region spans residues 266–273 (ILFLNKKD). Positions 325–330 (TCATDT) are G5 motif.

The protein belongs to the G-alpha family. G(i/o/t/z) subfamily. As to quaternary structure, g proteins are composed of 3 units; alpha, beta and gamma. The alpha chain contains the guanine nucleotide binding site.

Its subcellular location is the cytoplasm. The protein resides in the cytoskeleton. The protein localises to the microtubule organizing center. It is found in the centrosome. It localises to the cell membrane. Its function is as follows. Guanine nucleotide-binding proteins (G proteins) are involved as modulators or transducers in various transmembrane signaling systems. The G(i) proteins are involved in hormonal regulation of adenylate cyclase: they inhibit the cyclase in response to beta-adrenergic stimuli. May play a role in cell division. The chain is Guanine nucleotide-binding protein G(i) subunit alpha-2 (gnai2) from Oryzias latipes (Japanese rice fish).